The following is a 464-amino-acid chain: Phosphoenolpyruvate carboxylase (464 aa).

This sequence belongs to the PEPCase type 2 family. Homotetramer. Mg(2+) is required as a cofactor.

It carries out the reaction oxaloacetate + phosphate = phosphoenolpyruvate + hydrogencarbonate. Catalyzes the irreversible beta-carboxylation of phosphoenolpyruvate (PEP) to form oxaloacetate (OAA), a four-carbon dicarboxylic acid source for the tricarboxylic acid cycle. This chain is Phosphoenolpyruvate carboxylase, found in Thermofilum pendens (strain DSM 2475 / Hrk 5).